A 264-amino-acid polypeptide reads, in one-letter code: Transformer-2 sex-determining protein (264 aa).

Residues 1–96 form a disordered region; the sequence is MDREPLSSGR…HKSREHPQAS (96 aa). The segment covering 13–22 has biased composition (basic residues); the sequence is CSARYKHKRS. Over residues 23-33 the composition is skewed to low complexity; that stretch reads ASSSSAGTTSS. Position 40 is a phosphoserine (S40). Positions 47 to 61 are enriched in basic residues; it reads SRRHQRSSSRRRSRS. The span at 71-85 shows a compositional bias: basic and acidic residues; that stretch reads EPRHRSGRSSRDRER. The 79-residue stretch at 97 to 175 folds into the RRM domain; it reads RCIGVFGLNT…RRIRVDFSIT (79 aa). Residues 176-196 are linker; it reads QRAHTPTPGVYLGRQPRGKAP. Positions 179-264 are disordered; the sequence is HTPTPGVYLG…PQLRRTSSRY (86 aa). Position 180 is a phosphothreonine (T180). Basic residues predominate over residues 191–206; sequence PRGKAPRSFSPRRGRR. Positions 207-234 are enriched in basic and acidic residues; that stretch reads VYHDRSASPYDNYRDRYDYRNDRYDRNL. S212 and S214 each carry phosphoserine. Residues 235–250 show a composition bias toward basic residues; that stretch reads RRSPSRNRYTRNRSYS. A Phosphoserine modification is found at S254.

This sequence belongs to the splicing factor SR family. In terms of processing, extensively phosphorylated on serine residues in the RS domain. In terms of tissue distribution, isoform Tmaj and isoform Tmin are expressed in males and females. Isoform msTmaj and isoform msTmin are present only in male germ cells.

Functionally, required for female sex determination in somatic cells and for spermatogenesis in male germ cells. Positive regulator of female-specific splicing and/or polyadenylation of doublesex (dsx) pre-mRNA. Splicing requires an enhancer complex, dsxRE (dsx repeat element: which contains six copies of a 13-nucleotide repeat and a purine-rich enhancer (PRE)). DsxRE is formed through cooperative interactions between tra, tra2 and the sr proteins, and these interactions require both the repeat sequences and PRE. PRE is required for specific binding of tra2 to the dsxRE. Protein-RNA and protein-protein interactions are involved in tra-2 dependent activation and repression of alternative splicing. Together with tra-2, plays a role in switching fru splicing from the male-specific pattern to the female-specific pattern through activation of the female-specific fru 5'-splice site. In Drosophila melanogaster (Fruit fly), this protein is Transformer-2 sex-determining protein (tra2).